The following is a 114-amino-acid chain: Aspartate 1-decarboxylase (114 aa).

Serine 25 functions as the Schiff-base intermediate with substrate; via pyruvic acid in the catalytic mechanism. At serine 25 the chain carries Pyruvic acid (Ser). Position 57 (threonine 57) interacts with substrate. The Proton donor role is filled by tyrosine 58. 73-75 lines the substrate pocket; the sequence is GAA.

Belongs to the PanD family. Heterooctamer of four alpha and four beta subunits. It depends on pyruvate as a cofactor. Is synthesized initially as an inactive proenzyme, which is activated by self-cleavage at a specific serine bond to produce a beta-subunit with a hydroxyl group at its C-terminus and an alpha-subunit with a pyruvoyl group at its N-terminus.

It localises to the cytoplasm. The catalysed reaction is L-aspartate + H(+) = beta-alanine + CO2. Its pathway is cofactor biosynthesis; (R)-pantothenate biosynthesis; beta-alanine from L-aspartate: step 1/1. In terms of biological role, catalyzes the pyruvoyl-dependent decarboxylation of aspartate to produce beta-alanine. This chain is Aspartate 1-decarboxylase, found in Thermotoga petrophila (strain ATCC BAA-488 / DSM 13995 / JCM 10881 / RKU-1).